A 547-amino-acid polypeptide reads, in one-letter code: Cellodextrinase (547 aa).

D148 (nucleophile) is an active-site residue. Catalysis depends on residues H474, D520, and E529.

It belongs to the glycosyl hydrolase 9 (cellulase E) family.

Its subcellular location is the secreted. It carries out the reaction Endohydrolysis of (1-&gt;4)-beta-D-glucosidic linkages in cellulose, lichenin and cereal beta-D-glucans.. With respect to regulation, is not inhibited by methylcellulose. Functionally, glycoside hydrolase that rapidly hydrolyzes short-chain cellodextrins to yield either cellobiose or cellobiose and glucose as end products; cellobiose is not hydrolyzed further. Also shows limited activity against endoglucanase specific substrates (carboxymethylcellulose (CMC), lichenan, laminarin and xylan). This chain is Cellodextrinase, found in Butyrivibrio fibrisolvens.